The sequence spans 644 residues: Exoribonuclease 2 (644 aa).

Residues 189 to 516 (RQDLTALNFV…NHRLLKAAIK (328 aa)) enclose the RNB domain. In terms of domain architecture, S1 motif spans 561–643 (DTRFAAEIID…ETRSIIARPV (83 aa)).

Belongs to the RNR ribonuclease family. RNase II subfamily.

Its subcellular location is the cytoplasm. The catalysed reaction is Exonucleolytic cleavage in the 3'- to 5'-direction to yield nucleoside 5'-phosphates.. Involved in mRNA degradation. Hydrolyzes single-stranded polyribonucleotides processively in the 3' to 5' direction. The sequence is that of Exoribonuclease 2 from Escherichia fergusonii (strain ATCC 35469 / DSM 13698 / CCUG 18766 / IAM 14443 / JCM 21226 / LMG 7866 / NBRC 102419 / NCTC 12128 / CDC 0568-73).